An 82-amino-acid chain; its full sequence is RNA-binding protein Hfq (82 aa).

A Sm domain is found at 11–71 (DTFLNHVRKT…ISTIMPGAPI (61 aa)).

It belongs to the Hfq family. Homohexamer.

In terms of biological role, RNA chaperone that binds small regulatory RNA (sRNAs) and mRNAs to facilitate mRNA translational regulation in response to envelope stress, environmental stress and changes in metabolite concentrations. Also binds with high specificity to tRNAs. The chain is RNA-binding protein Hfq from Rhodopseudomonas palustris (strain BisA53).